A 143-amino-acid chain; its full sequence is NADH-quinone oxidoreductase subunit A (143 aa).

Helical transmembrane passes span 8 to 28 (FGNV…GYLT), 63 to 83 (FYVV…LYPW), and 93 to 113 (FALI…AYAW).

Belongs to the complex I subunit 3 family. As to quaternary structure, NDH-1 is composed of 14 different subunits. Subunits NuoA, H, J, K, L, M, N constitute the membrane sector of the complex.

It localises to the cell inner membrane. The catalysed reaction is a quinone + NADH + 5 H(+)(in) = a quinol + NAD(+) + 4 H(+)(out). NDH-1 shuttles electrons from NADH, via FMN and iron-sulfur (Fe-S) centers, to quinones in the respiratory chain. The immediate electron acceptor for the enzyme in this species is believed to be a menaquinone. Couples the redox reaction to proton translocation (for every two electrons transferred, four hydrogen ions are translocated across the cytoplasmic membrane), and thus conserves the redox energy in a proton gradient. This is NADH-quinone oxidoreductase subunit A from Pelodictyon phaeoclathratiforme (strain DSM 5477 / BU-1).